A 136-amino-acid chain; its full sequence is Large ribosomal subunit protein uL16 (136 aa).

The protein belongs to the universal ribosomal protein uL16 family. Part of the 50S ribosomal subunit.

In terms of biological role, binds 23S rRNA and is also seen to make contacts with the A and possibly P site tRNAs. The polypeptide is Large ribosomal subunit protein uL16 (Vesicomyosocius okutanii subsp. Calyptogena okutanii (strain HA)).